The following is a 436-amino-acid chain: AMSH-like protease (436 aa).

The residue at position 1 (Met1) is an N-acetylmethionine. A phosphoserine mark is found at Ser25 and Ser242. Residues 269–397 enclose the MPN domain; that stretch reads VVLPEDLCHK…IFRLTNAGML (129 aa). Zn(2+) is bound by residues His347, His349, Asp360, His362, Cys402, His408, and His410. The JAMM motif signature appears at 347 to 360; the sequence is HTHPTQTAFLSSVD.

Belongs to the peptidase M67C family. Requires Zn(2+) as cofactor. In terms of tissue distribution, ubiquitously expressed.

With respect to regulation, inhibited by UbV(SP.1), an ubiquitin variant that also inhibits STAMBP. Functionally, zinc metalloprotease that specifically cleaves 'Lys-63'-linked polyubiquitin chains. Acts as a positive regulator of the TORC1 signaling pathway by mediating 'Lys-63'-linked deubiquitination of SESN2, thereby inhibiting SESN2-interaction with the GATOR2 complex. Does not cleave 'Lys-48'-linked polyubiquitin chains. This chain is AMSH-like protease, found in Homo sapiens (Human).